The primary structure comprises 76 residues: Large ribosomal subunit protein eL20 (76 aa).

This sequence belongs to the eukaryotic ribosomal protein eL20 family. Part of the 50S ribosomal subunit. Binds 23S rRNA.

The sequence is that of Large ribosomal subunit protein eL20 from Methanococcus vannielii (strain ATCC 35089 / DSM 1224 / JCM 13029 / OCM 148 / SB).